An 874-amino-acid chain; its full sequence is Alanine--tRNA ligase (874 aa).

Zn(2+)-binding residues include His-563, His-567, Cys-665, and His-669.

It belongs to the class-II aminoacyl-tRNA synthetase family. Requires Zn(2+) as cofactor.

It is found in the cytoplasm. It catalyses the reaction tRNA(Ala) + L-alanine + ATP = L-alanyl-tRNA(Ala) + AMP + diphosphate. Its function is as follows. Catalyzes the attachment of alanine to tRNA(Ala) in a two-step reaction: alanine is first activated by ATP to form Ala-AMP and then transferred to the acceptor end of tRNA(Ala). Also edits incorrectly charged Ser-tRNA(Ala) and Gly-tRNA(Ala) via its editing domain. In Haemophilus influenzae (strain PittGG), this protein is Alanine--tRNA ligase.